The sequence spans 493 residues: Activin receptor type-1C (493 aa).

An N-terminal signal peptide occupies residues 1–20; the sequence is MTRALCSALRQALLLLAAAA. Over 22-113 the chain is Extracellular; the sequence is LSPGLKCVCL…PNAPKLGPME (92 aa). The chain crosses the membrane as a helical span at residues 114–134; the sequence is LAIIITVPVCLLSIAAMLTVW. Residues 135–493 lie on the Cytoplasmic side of the membrane; it reads ACQGRQCSYR…QLCVKEDCKA (359 aa). One can recognise a GS domain in the interval 165–194; that stretch reads KTLKDLIYDVTASGSGSGLPLLVQRTIART. The 291-residue stretch at 195–485 folds into the Protein kinase domain; the sequence is IVLQEIVGKG…LRIKKTISQL (291 aa). ATP is bound by residues 201-209 and Lys-222; that span reads VGKGRFGEV. Asp-323 acts as the Proton acceptor in catalysis.

Belongs to the protein kinase superfamily. TKL Ser/Thr protein kinase family. TGFB receptor subfamily. As to quaternary structure, binds the type 2 receptor protein ACVR2A. Mg(2+) is required as a cofactor. Requires Mn(2+) as cofactor. Present in pancreas, heart, colon, small intestine, ovary and the hippocampus, medulla oblongata and putamen of the brain. Isoform 1, isoform 2, isoform 3 and isoform 4 are all expressed in the placenta throughout pregnancy.

It is found in the membrane. It carries out the reaction L-threonyl-[receptor-protein] + ATP = O-phospho-L-threonyl-[receptor-protein] + ADP + H(+). It catalyses the reaction L-seryl-[receptor-protein] + ATP = O-phospho-L-seryl-[receptor-protein] + ADP + H(+). Its function is as follows. Serine/threonine protein kinase which forms a receptor complex on ligand binding. The receptor complex consists of 2 type II and 2 type I transmembrane serine/threonine kinases. Type II receptors phosphorylate and activate type I receptors which autophosphorylate, then bind and activate SMAD transcriptional regulators, SMAD2 and SMAD3. Receptor for activin AB, activin B, activin E and NODAL. Upon NODAL binding, activation results in increased apoptosis and reduced proliferation through suppression of AKT signaling and the activation of Smad2-dependent signaling pathway in pancreatic beta-cells, trophoblasts, epithelial or neuronal cells. Acts as a positive regulator for macrophage activation partially through down-regulation of PPARG expression. This is Activin receptor type-1C from Homo sapiens (Human).